We begin with the raw amino-acid sequence, 1400 residues long: DNA-directed RNA polymerase subunit beta (1400 aa).

The protein belongs to the RNA polymerase beta chain family. In terms of assembly, the RNAP catalytic core consists of 2 alpha, 1 beta, 1 beta' and 1 omega subunit. When a sigma factor is associated with the core the holoenzyme is formed, which can initiate transcription.

The catalysed reaction is RNA(n) + a ribonucleoside 5'-triphosphate = RNA(n+1) + diphosphate. Its function is as follows. DNA-dependent RNA polymerase catalyzes the transcription of DNA into RNA using the four ribonucleoside triphosphates as substrates. The protein is DNA-directed RNA polymerase subunit beta of Acidiphilium cryptum (strain JF-5).